A 132-amino-acid chain; its full sequence is UPF0299 membrane protein KPN78578_25390 (132 aa).

Helical transmembrane passes span 5-25 (LTII…LYAG), 38-60 (GSII…PQWV), 66-86 (ILIR…MQYW), and 93-113 (LGPV…VVSW).

Belongs to the UPF0299 family.

The protein resides in the cell inner membrane. The polypeptide is UPF0299 membrane protein KPN78578_25390 (Klebsiella pneumoniae subsp. pneumoniae (strain ATCC 700721 / MGH 78578)).